We begin with the raw amino-acid sequence, 233 residues long: Demethylmenaquinone methyltransferase (233 aa).

S-adenosyl-L-methionine contacts are provided by residues Thr60, Asp81, and 106–107 (DA).

This sequence belongs to the class I-like SAM-binding methyltransferase superfamily. MenG/UbiE family.

The catalysed reaction is a 2-demethylmenaquinol + S-adenosyl-L-methionine = a menaquinol + S-adenosyl-L-homocysteine + H(+). It participates in quinol/quinone metabolism; menaquinone biosynthesis; menaquinol from 1,4-dihydroxy-2-naphthoate: step 2/2. Its function is as follows. Methyltransferase required for the conversion of demethylmenaquinol (DMKH2) to menaquinol (MKH2). The sequence is that of Demethylmenaquinone methyltransferase from Staphylococcus saprophyticus subsp. saprophyticus (strain ATCC 15305 / DSM 20229 / NCIMB 8711 / NCTC 7292 / S-41).